The following is a 96-amino-acid chain: Ribonuclease P protein component 1 (96 aa).

This sequence belongs to the eukaryotic/archaeal RNase P protein component 1 family. Consists of a catalytic RNA component and at least 5 protein subunits.

The protein localises to the cytoplasm. The enzyme catalyses Endonucleolytic cleavage of RNA, removing 5'-extranucleotides from tRNA precursor.. In terms of biological role, part of ribonuclease P, a protein complex that generates mature tRNA molecules by cleaving their 5'-ends. The sequence is that of Ribonuclease P protein component 1 from Methanococcus maripaludis (strain DSM 14266 / JCM 13030 / NBRC 101832 / S2 / LL).